Reading from the N-terminus, the 87-residue chain is Small ribosomal subunit protein bS16 (87 aa).

This sequence belongs to the bacterial ribosomal protein bS16 family.

The sequence is that of Small ribosomal subunit protein bS16 from Nitrosospira multiformis (strain ATCC 25196 / NCIMB 11849 / C 71).